The primary structure comprises 1517 residues: DNA-directed RNA polymerase subunit beta' (1517 aa).

Residues Cys-71, Cys-73, Cys-86, and Cys-89 each contribute to the Zn(2+) site. Positions 482, 484, and 486 each coordinate Mg(2+). Cys-812, Cys-886, Cys-893, and Cys-896 together coordinate Zn(2+).

The protein belongs to the RNA polymerase beta' chain family. As to quaternary structure, the RNAP catalytic core consists of 2 alpha, 1 beta, 1 beta' and 1 omega subunit. When a sigma factor is associated with the core the holoenzyme is formed, which can initiate transcription. Mg(2+) serves as cofactor. The cofactor is Zn(2+).

The catalysed reaction is RNA(n) + a ribonucleoside 5'-triphosphate = RNA(n+1) + diphosphate. Its function is as follows. DNA-dependent RNA polymerase catalyzes the transcription of DNA into RNA using the four ribonucleoside triphosphates as substrates. In Campylobacter jejuni subsp. jejuni serotype O:2 (strain ATCC 700819 / NCTC 11168), this protein is DNA-directed RNA polymerase subunit beta'.